The sequence spans 743 residues: Probable TonB-dependent siderophore receptor PiuA (743 aa).

The N-terminal stretch at 1–28 is a signal peptide; sequence MSLIRTRKKIVSSAIASSLSMIATTAMA. Residues 61–167 enclose the TBDR plug domain; sequence PLLDTPKSVS…VGGSINMISK (107 aa). In terms of domain architecture, TBDR beta-barrel spans 172 to 743; sequence GDFLEGSVAA…SAVLAVNFKY (572 aa). 2 disulfides stabilise this stretch: Cys-408–Cys-416 and Cys-627–Cys-632.

This sequence belongs to the TonB-dependent receptor family.

It localises to the cell outer membrane. Its function is as follows. Probably involved in the initial step of iron uptake by binding iron chelating siderophores, thereby allowing extraction of iron from the environment. May bind the siderophore, ferric enterobactin, with micromolar affinity. The polypeptide is Probable TonB-dependent siderophore receptor PiuA (Acinetobacter baumannii (strain ATCC 19606 / DSM 30007 / JCM 6841 / CCUG 19606 / CIP 70.34 / NBRC 109757 / NCIMB 12457 / NCTC 12156 / 81)).